Here is a 248-residue protein sequence, read N- to C-terminus: Probable transcriptional regulatory protein MYPE8020 (248 aa).

The protein belongs to the TACO1 family.

It localises to the cytoplasm. The sequence is that of Probable transcriptional regulatory protein MYPE8020 from Malacoplasma penetrans (strain HF-2) (Mycoplasma penetrans).